We begin with the raw amino-acid sequence, 1604 residues long: Ubiquitin carboxyl-terminal hydrolase 32 (1604 aa).

EF-hand domains lie at 91 to 126, 228 to 263, and 264 to 299; these read KDEEKAKYIFSLFSSESGNYVIREEMERMLHVVDGK, IRPSLSEGLFNAFDENRDNHIDFKEISCGLSACCRG, and PLAERQKFCFKVFDVDRDGVLSRVELRDMVVALLEV. Positions 241, 243, 245, 247, 252, 277, 279, 281, and 288 each coordinate Ca(2+). Residues 369-585 form the DUSP domain; sequence ATPEEEGQII…ANLALPRPVI (217 aa). The USP domain occupies 734–1567; the sequence is TGLSNLGNTC…SAYILFYEQQ (834 aa). Cys743 (nucleophile) is an active-site residue. Tyr1173 carries the phosphotyrosine modification. 2 disordered regions span residues 1343–1362 and 1367–1431; these read KKVDAQSSAGEEDVLLSKSP and ANII…DASK. 4 positions are modified to phosphoserine: Ser1350, Ser1372, Ser1376, and Ser1454. Positions 1367-1399 are enriched in low complexity; it reads ANIISSPKGSPSSSRKSGTSCPSSKNSSPNSSP. His1526 serves as the catalytic Proton acceptor. Ser1588 carries the post-translational modification Phosphoserine. Cys1601 bears the Cysteine methyl ester mark. Cys1601 is lipidated: S-farnesyl cysteine. A propeptide spans 1602 to 1604 (removed in mature form); sequence VLQ.

This sequence belongs to the peptidase C19 family.

Its subcellular location is the golgi apparatus membrane. It catalyses the reaction Thiol-dependent hydrolysis of ester, thioester, amide, peptide and isopeptide bonds formed by the C-terminal Gly of ubiquitin (a 76-residue protein attached to proteins as an intracellular targeting signal).. In terms of biological role, deubiquitinase that can remove conjugated ubiquitin from target proteins, such as RAB7A and LAMTOR1. Acts as a positive regulator of the mTORC1 signaling by mediating deubiquitination of LAMTOR1, thereby promoting the association between LAMTOR1 and the lysosomal V-ATPase complex and subsequent activation of the mTORC1 complex. This is Ubiquitin carboxyl-terminal hydrolase 32 (USP32) from Homo sapiens (Human).